The following is a 61-amino-acid chain: Large ribosomal subunit protein uL30 (61 aa).

The protein belongs to the universal ribosomal protein uL30 family. In terms of assembly, part of the 50S ribosomal subunit.

In Corynebacterium jeikeium (strain K411), this protein is Large ribosomal subunit protein uL30.